Here is a 350-residue protein sequence, read N- to C-terminus: L-threonine 3-dehydrogenase (350 aa).

Residue Cys-42 coordinates Zn(2+). Catalysis depends on charge relay system residues Thr-44 and His-47. His-67, Glu-68, Cys-97, Cys-100, Cys-103, and Cys-111 together coordinate Zn(2+). NAD(+) is bound by residues Leu-179, Glu-199, Arg-204, 266 to 268 (LGL), and 291 to 292 (IT).

It belongs to the zinc-containing alcohol dehydrogenase family. In terms of assembly, homotetramer. It depends on Zn(2+) as a cofactor.

The protein resides in the cytoplasm. The enzyme catalyses L-threonine + NAD(+) = (2S)-2-amino-3-oxobutanoate + NADH + H(+). The protein operates within amino-acid degradation; L-threonine degradation via oxydo-reductase pathway; glycine from L-threonine: step 1/2. In terms of biological role, catalyzes the NAD(+)-dependent oxidation of L-threonine to 2-amino-3-ketobutyrate. To a lesser extent, also catalyzes the oxidation of L-serine. The protein is L-threonine 3-dehydrogenase of Thermococcus kodakarensis (strain ATCC BAA-918 / JCM 12380 / KOD1) (Pyrococcus kodakaraensis (strain KOD1)).